Reading from the N-terminus, the 124-residue chain is Fluoride-specific ion channel FluC (124 aa).

The next 4 membrane-spanning stretches (helical) occupy residues 5-25 (LLVSLGAVAGAILRWQLAVWF), 32-52 (FAFGTLFVNLCGCFLIGITLG), 61-81 (LLFVTGFLGSFTTFSSFSAEV), and 94-114 (LAVISAHLIGGLVLTILGILV). Residues G69 and T72 each coordinate Na(+).

This sequence belongs to the fluoride channel Fluc/FEX (TC 1.A.43) family.

It is found in the cell inner membrane. It carries out the reaction fluoride(in) = fluoride(out). With respect to regulation, na(+) is not transported, but it plays an essential structural role and its presence is essential for fluoride channel function. Functionally, fluoride-specific ion channel. Important for reducing fluoride concentration in the cell, thus reducing its toxicity. The protein is Fluoride-specific ion channel FluC of Haemophilus ducreyi (strain 35000HP / ATCC 700724).